We begin with the raw amino-acid sequence, 317 residues long: Methionyl-tRNA formyltransferase (317 aa).

Residue 109 to 112 (SLLP) coordinates (6S)-5,6,7,8-tetrahydrofolate.

It belongs to the Fmt family.

The enzyme catalyses L-methionyl-tRNA(fMet) + (6R)-10-formyltetrahydrofolate = N-formyl-L-methionyl-tRNA(fMet) + (6S)-5,6,7,8-tetrahydrofolate + H(+). Functionally, attaches a formyl group to the free amino group of methionyl-tRNA(fMet). The formyl group appears to play a dual role in the initiator identity of N-formylmethionyl-tRNA by promoting its recognition by IF2 and preventing the misappropriation of this tRNA by the elongation apparatus. The protein is Methionyl-tRNA formyltransferase of Halalkalibacterium halodurans (strain ATCC BAA-125 / DSM 18197 / FERM 7344 / JCM 9153 / C-125) (Bacillus halodurans).